The sequence spans 415 residues: MRFYKIISFMLLGLDDTDSPDGMCTTYLGALIANELKRRGFTVTNHRLVRLNPNVIWKTRGNAGISLEISGGDSTVVFEIACEFVERFARFECEKTNPGVVVVESPPDPAFYYQALQRFCTIEETVKRLERIGALYKGYKNGRGLIGALAAVSSVLPDKTYECLAYRKNEVLGTPRIYAEEGFFTSEEQTAPHTWDTVDFIRREIVCVPHGKDPVLYGIRGDTPKWAIKATGFLETEEPAFSQIWETNQGTDAHLLPLPDGGPIEGESYRFSGVVESLPITNRGGHVQFTILSNGMEIPVFAFEPTKYFRNAVRELVVGDEITICGSFQKGVLHLEKFRPNLLATQKSRSSPRCPICGGRMTSAGKDKGYKCRECSGKVRDVPDQERTLQTKWYEVPPGSRRHLAKPAVRMKDDI.

This sequence belongs to the TiaS family.

It localises to the cytoplasm. The catalysed reaction is cytidine(34) in tRNA(Ile2) + agmatine + ATP + H2O = 2-agmatinylcytidine(34) in tRNA(Ile2) + AMP + 2 phosphate + 2 H(+). Its function is as follows. ATP-dependent agmatine transferase that catalyzes the formation of 2-agmatinylcytidine (agm2C) at the wobble position (C34) of tRNA(Ile2), converting the codon specificity from AUG to AUA. In Methanocorpusculum labreanum (strain ATCC 43576 / DSM 4855 / Z), this protein is tRNA(Ile2) 2-agmatinylcytidine synthetase TiaS.